The chain runs to 263 residues: 3-methyl-2-oxobutanoate hydroxymethyltransferase (263 aa).

Mg(2+) contacts are provided by aspartate 44 and aspartate 83. Residues 44-45, aspartate 83, and lysine 112 each bind 3-methyl-2-oxobutanoate; that span reads DS. Glutamate 114 contributes to the Mg(2+) binding site. Residue glutamate 181 is the Proton acceptor of the active site.

It belongs to the PanB family. In terms of assembly, homodecamer; pentamer of dimers. The cofactor is Mg(2+).

The protein resides in the cytoplasm. The catalysed reaction is 3-methyl-2-oxobutanoate + (6R)-5,10-methylene-5,6,7,8-tetrahydrofolate + H2O = 2-dehydropantoate + (6S)-5,6,7,8-tetrahydrofolate. It participates in cofactor biosynthesis; (R)-pantothenate biosynthesis; (R)-pantoate from 3-methyl-2-oxobutanoate: step 1/2. Functionally, catalyzes the reversible reaction in which hydroxymethyl group from 5,10-methylenetetrahydrofolate is transferred onto alpha-ketoisovalerate to form ketopantoate. The sequence is that of 3-methyl-2-oxobutanoate hydroxymethyltransferase from Sulfurimonas denitrificans (strain ATCC 33889 / DSM 1251) (Thiomicrospira denitrificans (strain ATCC 33889 / DSM 1251)).